Here is a 1324-residue protein sequence, read N- to C-terminus: Tetratricopeptide repeat protein 21 homolog (1324 aa).

TPR repeat units follow at residues 58–91 (PALA…NDVA), 414–446 (SPLY…LVEM), 582–615 (SLYH…PRKE), 669–702 (DQLV…QSNF), 737–770 (PGSY…QSKD), 772–804 (QLAE…YKDK), 806–837 (MRLK…DPEP), 847–880 (IQFL…HSRI), 894–927 (ARIC…HETD), 929–961 (KANL…DPHN), 963–995 (EANS…NPQH), 997–1029 (HALS…NPRC), 1033–1066 (SGYN…AAGW), 1205–1238 (EKCW…NCNC), 1240–1272 (KAFE…TKER), and 1274–1307 (PGFG…NPQY).

Belongs to the TTC21 family. In terms of assembly, component of the IFT complex A (IFT-A) composed of at least che-11, daf-10, dyf-2, ift-139, ift-43 and ifta-1. As to expression, expressed in ciliated sensory neurons in the head and tail.

The protein localises to the cell projection. It localises to the cilium. It is found in the cytoplasm. The protein resides in the cytoskeleton. Its subcellular location is the cilium basal body. The protein localises to the dendrite. Component of the IFT complex A (IFT-A), a complex required for retrograde ciliary transport. In particular, may act redundantly with the intraflagellar transport protein ift-43 to regulate the transport of specific ciliary cargo proteins such as che-3 which are related to motility. Functions in cilia biogenesis. The sequence is that of Tetratricopeptide repeat protein 21 homolog from Caenorhabditis elegans.